We begin with the raw amino-acid sequence, 263 residues long: PDZ domain-containing protein 9 (263 aa).

Positions 30 to 109 (QTKLTVGSMG…GTILQIKVYR (80 aa)) constitute a PDZ domain.

The polypeptide is PDZ domain-containing protein 9 (PDZD9) (Bos taurus (Bovine)).